Here is a 293-residue protein sequence, read N- to C-terminus: Ribosomal RNA small subunit methyltransferase A (293 aa).

The S-adenosyl-L-methionine site is built by asparagine 38, valine 40, glycine 65, glutamate 86, aspartate 116, and asparagine 135.

It belongs to the class I-like SAM-binding methyltransferase superfamily. rRNA adenine N(6)-methyltransferase family. RsmA subfamily.

The protein resides in the cytoplasm. It catalyses the reaction adenosine(1518)/adenosine(1519) in 16S rRNA + 4 S-adenosyl-L-methionine = N(6)-dimethyladenosine(1518)/N(6)-dimethyladenosine(1519) in 16S rRNA + 4 S-adenosyl-L-homocysteine + 4 H(+). Functionally, specifically dimethylates two adjacent adenosines (A1518 and A1519) in the loop of a conserved hairpin near the 3'-end of 16S rRNA in the 30S particle. May play a critical role in biogenesis of 30S subunits. The sequence is that of Ribosomal RNA small subunit methyltransferase A from Nocardia farcinica (strain IFM 10152).